The sequence spans 62 residues: Translational regulator CsrA (62 aa).

This sequence belongs to the CsrA/RsmA family. In terms of assembly, homodimer; the beta-strands of each monomer intercalate to form a hydrophobic core, while the alpha-helices form wings that extend away from the core.

Its subcellular location is the cytoplasm. Its function is as follows. A key translational regulator that binds mRNA to regulate translation initiation and/or mRNA stability. Mediates global changes in gene expression, shifting from rapid growth to stress survival by linking envelope stress, the stringent response and the catabolite repression systems. Usually binds in the 5'-UTR; binding at or near the Shine-Dalgarno sequence prevents ribosome-binding, repressing translation, binding elsewhere in the 5'-UTR can activate translation and/or stabilize the mRNA. Its function is antagonized by small RNA(s). The polypeptide is Translational regulator CsrA (Haemophilus ducreyi (strain 35000HP / ATCC 700724)).